A 189-amino-acid polypeptide reads, in one-letter code: GTPase NRas (189 aa).

Residues 10–18 and 29–30 each bind GTP; these read GAGGVGKSA and VD. The short motif at 32–40 is the Effector region element; it reads YDPTIEDSY. Residue 57 to 61 coordinates GTP; the sequence is DTAGQ. Phosphoserine is present on Ser-89. 116–119 serves as a coordination point for GTP; it reads NKCD. Residues 166 to 185 form a hypervariable region region; sequence YRLKKLNSSDDGTQGCMGSP. Lys-170 is covalently cross-linked (Glycyl lysine isopeptide (Lys-Gly) (interchain with G-Cter in ubiquitin)). Cys-181 is lipidated: S-palmitoyl cysteine. Residue Cys-186 is the site of S-farnesyl cysteine attachment. A propeptide spans 187–189 (removed in mature form); sequence VLM.

It belongs to the small GTPase superfamily. Ras family. In terms of assembly, interacts (active GTP-bound form preferentially) with RGS14. Interacts (active GTP-bound form) with RASSF7. Interacts (active GTP-bound form) with both SHOC2 and PP1c (all isoforms) to form a tertiary complex; SHOC2 and PP1c preferably bind M-Ras/MRAS, but they also bind K-Ras/KRAS, N-Ras/NRAS and H-Ras/HRAS. Palmitoylated by the ZDHHC9-GOLGA7 complex. Depalmitoylated by ABHD17A, ABHD17B and ABHD17C. A continuous cycle of de- and re-palmitoylation regulates rapid exchange between plasma membrane and Golgi. In terms of processing, acetylation at Lys-104 prevents interaction with guanine nucleotide exchange factors (GEFs). Post-translationally, ubiquitinated by the BCR(LZTR1) E3 ubiquitin ligase complex at Lys-170 in a non-degradative manner, leading to inhibit Ras signaling by decreasing Ras association with membranes. Phosphorylation at Ser-89 enhances NRAS association with its downstream effectors.

It is found in the cell membrane. It localises to the golgi apparatus membrane. The enzyme catalyses GTP + H2O = GDP + phosphate + H(+). Alternates between an inactive form bound to GDP and an active form bound to GTP. Activated by a guanine nucleotide-exchange factor (GEF) and inactivated by a GTPase-activating protein (GAP). In terms of biological role, ras proteins bind GDP/GTP and possess intrinsic GTPase activity. The polypeptide is GTPase NRas (Nras) (Mus musculus (Mouse)).